A 277-amino-acid chain; its full sequence is Putative phosphoenolpyruvate synthase regulatory protein (277 aa).

157–164 lines the ADP pocket; that stretch reads GVSRCGKT.

The protein belongs to the pyruvate, phosphate/water dikinase regulatory protein family. PSRP subfamily.

It catalyses the reaction [pyruvate, water dikinase] + ADP = [pyruvate, water dikinase]-phosphate + AMP + H(+). The catalysed reaction is [pyruvate, water dikinase]-phosphate + phosphate + H(+) = [pyruvate, water dikinase] + diphosphate. Functionally, bifunctional serine/threonine kinase and phosphorylase involved in the regulation of the phosphoenolpyruvate synthase (PEPS) by catalyzing its phosphorylation/dephosphorylation. The protein is Putative phosphoenolpyruvate synthase regulatory protein of Citrobacter koseri (strain ATCC BAA-895 / CDC 4225-83 / SGSC4696).